The chain runs to 494 residues: 3-octaprenyl-4-hydroxybenzoate carboxy-lyase (494 aa).

Asparagine 172 is a binding site for Mn(2+). Prenylated FMN-binding positions include 175-177 (IYR), 189-191 (RWL), and 194-195 (RG). Glutamate 238 lines the Mn(2+) pocket. Aspartate 287 acts as the Proton donor in catalysis.

This sequence belongs to the UbiD family. Homohexamer. Prenylated FMN serves as cofactor. It depends on Mn(2+) as a cofactor.

Its subcellular location is the cell membrane. It carries out the reaction a 4-hydroxy-3-(all-trans-polyprenyl)benzoate + H(+) = a 2-(all-trans-polyprenyl)phenol + CO2. It functions in the pathway cofactor biosynthesis; ubiquinone biosynthesis. Its function is as follows. Catalyzes the decarboxylation of 3-octaprenyl-4-hydroxy benzoate to 2-octaprenylphenol, an intermediate step in ubiquinone biosynthesis. The chain is 3-octaprenyl-4-hydroxybenzoate carboxy-lyase from Escherichia coli O9:H4 (strain HS).